A 128-amino-acid polypeptide reads, in one-letter code: Lymphocyte antigen 6D (128 aa).

Positions 1–20 (MRTALLLLAALAVATGPALT) are cleaved as a signal peptide. A UPAR/Ly6 domain is found at 21–108 (LRCHVCTSSS…AAPTRTALAH (88 aa)). 5 cysteine pairs are disulfide-bonded: C23–C45, C26–C32, C38–C63, C67–C86, and C87–C92. N98 is lipidated: GPI-anchor amidated asparagine. Residues 99-128 (AAPTRTALAHSALSLGLALSLLAVILAPSL) constitute a propeptide, removed in mature form.

As to expression, expressed exclusively at the outer cell surface of transitional epithelia and the keratinocyte of stratified squamous epithelia.

It is found in the cell membrane. Its function is as follows. May act as a specification marker at earliest stage specification of lymphocytes between B- and T-cell development. Marks the earliest stage of B-cell specification. This is Lymphocyte antigen 6D (LY6D) from Homo sapiens (Human).